The primary structure comprises 644 residues: Kininogen-1 (644 aa).

The signal sequence occupies residues 1–18 (MKLITILFLCSRLLLSLT). The residue at position 19 (Gln19) is a Pyrrolidone carboxylic acid; in mature form. The Cystatin kininogen-type 1 domain occupies 28 to 132 (CNDKDLFKAV…TQTCQITPAE (105 aa)). Cystine bridges form between Cys28/Cys614, Cys83/Cys94, Cys107/Cys126, Cys142/Cys145, Cys206/Cys218, Cys229/Cys248, Cys264/Cys267, Cys328/Cys340, and Cys351/Cys370. Asn48 carries N-linked (GlcNAc...) (complex) asparagine glycosylation. Residues 120-153 (SVATQTCQITPAEGPVVTAQYDCLGCVHPISTQS) form an O-glycosylated at one site only region. One can recognise a Cystatin kininogen-type 2 domain in the interval 151–254 (TQSPDLEPIL…SQNCDIYPGK (104 aa)). An N-linked (GlcNAc...) asparagine glycan is attached at Asn169. N-linked (GlcNAc...) (complex) asparagine glycosylation occurs at Asn205. Positions 273–376 (TNSPELEETL…TVNCQPLGMI (104 aa)) constitute a Cystatin kininogen-type 3 domain. An N-linked (GlcNAc...) (complex) asparagine glycan is attached at Asn294. Ser332 is subject to Phosphoserine; by FAM20C. A 4-hydroxyproline; partial modification is found at Pro383. The interval 387-555 (PFRSSRIGEI…TPIPSLAKPG (169 aa)) is disordered. An O-linked (GalNAc...) threonine glycan is attached at Thr401. A compositionally biased stretch (basic and acidic residues) spans 418–434 (DSGKEQGHTRRHDWGHE). 3 consecutive repeats follow at residues 420-449 (GKEQ…KHER), 450-479 (DQGH…KFKL), and 480-510 (DDDL…KNKG). A compositionally biased stretch (basic residues) spans 435-446 (KQRKHNLGHGHK). A compositionally biased stretch (basic and acidic residues) spans 477-493 (FKLDDDLEHQGGHVLDH). Positions 494 to 518 (GHKHKHGHGHGKHKNKGKKNGKHNG) are enriched in basic residues. The segment covering 524–539 (LASSSEDSTTPSAQTQ) has biased composition (polar residues). Residues Thr533, Thr542, Thr546, Thr557, and Thr571 are each glycosylated (O-linked (GalNAc...) threonine). O-linked (GalNAc...) serine glycosylation is present at Ser577. A glycan (O-linked (GalNAc...) threonine) is linked at Thr628.

In terms of assembly, interacts (high molecular weight kininogen) (via amino acids 402-532) with triafestin-1 and triafestin-2, anticoagulant proteins from Triatoma infestans. Interacts (high molecular weight kininogen) (via amino acids 402-532) with short form salivary protein D7R1, an anticoagulant protein from Anopheles stephensi. Interacts (high molecular weight kininogen) (via amino acids 421-466 and 459-513) with haemaphysalin, an anticoagulant protein from Haemaphysalis longicornis. Bradykinin is inactivated by ACE, which removes the dipeptide Arg-Phe from its C-terminus. Post-translationally, bradykinin is released from kininogen by plasma kallikrein. In terms of processing, hydroxylation of Pro-383 occurs prior to the release of bradykinin. Phosphorylated by FAM20C in the extracellular medium. Post-translationally, N- and O-glycosylated. O-glycosylated with core 1 or possibly core 8 glycans. In terms of processing, (Microbial infection) Bradykinin is generated upon proteolytic cleavage by S.pyogenes SpeB to produce hypotension during septic shock. Secreted in plasma. T-kinin is detected in malignant ovarian, colon and breast carcinomas, but not in benign tumors.

It is found in the secreted. The protein resides in the extracellular space. Kininogens are inhibitors of thiol proteases. HMW-kininogen plays an important role in blood coagulation by helping to position optimally prekallikrein and factor XI next to factor XII; HMW-kininogen inhibits the thrombin- and plasmin-induced aggregation of thrombocytes. LMW-kininogen inhibits the aggregation of thrombocytes. LMW-kininogen is in contrast to HMW-kininogen not involved in blood clotting. In terms of biological role, the active peptide bradykinin is a potent vasodilatator that is released from HMW-kininogen shows a variety of physiological effects: (A) influence in smooth muscle contraction, (B) induction of hypotension, (C) natriuresis and diuresis, (D) decrease in blood glucose level, (E) it is a mediator of inflammation and causes (E1) increase in vascular permeability, (E2) stimulation of nociceptors (4E3) release of other mediators of inflammation (e.g. prostaglandins), (F) it has a cardioprotective effect (directly via bradykinin action, indirectly via endothelium-derived relaxing factor action). The protein is Kininogen-1 (KNG1) of Homo sapiens (Human).